A 458-amino-acid polypeptide reads, in one-letter code: Ribulose bisphosphate carboxylase (458 aa).

Asn-111 contacts substrate. Lys-166 (proton acceptor) is an active-site residue. Position 168 (Lys-168) interacts with substrate. Positions 191, 193, and 194 each coordinate Mg(2+). Lys-191 is modified (N6-carboxylysine). His-287 acts as the Proton acceptor in catalysis. Substrate is bound by residues Arg-288, His-321, and Ser-368.

Belongs to the RuBisCO large chain family. Type II subfamily. In terms of assembly, homodimer. It depends on Mg(2+) as a cofactor.

It catalyses the reaction 2 (2R)-3-phosphoglycerate + 2 H(+) = D-ribulose 1,5-bisphosphate + CO2 + H2O. The catalysed reaction is D-ribulose 1,5-bisphosphate + O2 = 2-phosphoglycolate + (2R)-3-phosphoglycerate + 2 H(+). RuBisCO catalyzes two reactions: the carboxylation of D-ribulose 1,5-bisphosphate, the primary event in carbon dioxide fixation, as well as the oxidative fragmentation of the pentose substrate. Both reactions occur simultaneously and in competition at the same active site. The polypeptide is Ribulose bisphosphate carboxylase (cbbM) (Rhodobacter capsulatus (Rhodopseudomonas capsulata)).